Here is a 220-residue protein sequence, read N- to C-terminus: uncharacterized protein (220 aa).

Helical transmembrane passes span 25–45 (YFLLGLTLAFSAVVAYISMSL), 50–70 (PGLILMLAGFYGLLFLTYKLS), 74–94 (LGILSTFAFTGFLGYTLGPIL), 105–125 (IVVLALAGTAAVFFACSAYVL), 135–155 (SGTIFALFIVLLLGMVASFFF), 158–178 (PMLYIAISGLFVVFSTLGILY), and 196–216 (VSIFVSLYNLFISLLNIFSIL).

It belongs to the BI1 family.

Its subcellular location is the cell membrane. This is an uncharacterized protein from Pasteurella multocida (strain Pm70).